The chain runs to 113 residues: Endoribonuclease SymE (113 aa).

Positions 29–74 (SRYPDYSRIPAITLKGQWLEAAGFATGTAVDVKVMEGCIVLTAQPP) constitute a SpoVT-AbrB domain.

It belongs to the SymE family.

The protein resides in the cytoplasm. Functionally, involved in the degradation and recycling of damaged RNA. It is itself a target for degradation by the ATP-dependent protease Lon. The chain is Endoribonuclease SymE from Escherichia coli O6:K15:H31 (strain 536 / UPEC).